Reading from the N-terminus, the 351-residue chain is Heat-inducible transcription repressor HrcA (351 aa).

Belongs to the HrcA family.

Functionally, negative regulator of class I heat shock genes (grpE-dnaK-dnaJ and groELS operons). Prevents heat-shock induction of these operons. The sequence is that of Heat-inducible transcription repressor HrcA from Clostridium tetani (strain Massachusetts / E88).